A 521-amino-acid chain; its full sequence is NADH-quinone oxidoreductase subunit N (521 aa).

Transmembrane regions (helical) follow at residues 15–35 (LAPE…DLIL), 43–63 (IIGW…IWRM), 98–118 (LLKI…LGST), 128–148 (AEFY…ASSG), 150–170 (LVTL…LVGL), 185–205 (VVTG…LYGV), 227–247 (ALVY…IAAA), 261–281 (PTPV…AAVF), 303–323 (VFFA…VSAL), 331–351 (LLAL…AISV), 363–383 (VFYL…VTVI), 406–426 (AAAM…AGFF), 442–462 (WLVA…FGII), and 485–505 (TVIW…GPLM).

It belongs to the complex I subunit 2 family. NDH-1 is composed of 14 different subunits. Subunits NuoA, H, J, K, L, M, N constitute the membrane sector of the complex.

It is found in the cell membrane. It carries out the reaction a quinone + NADH + 5 H(+)(in) = a quinol + NAD(+) + 4 H(+)(out). NDH-1 shuttles electrons from NADH, via FMN and iron-sulfur (Fe-S) centers, to quinones in the respiratory chain. The immediate electron acceptor for the enzyme in this species is believed to be a menaquinone. Couples the redox reaction to proton translocation (for every two electrons transferred, four hydrogen ions are translocated across the cytoplasmic membrane), and thus conserves the redox energy in a proton gradient. The protein is NADH-quinone oxidoreductase subunit N of Paenibacillus sp. (strain JDR-2).